We begin with the raw amino-acid sequence, 364 residues long: Lytic cellulose monooxygenase (364 aa).

Residues 1–34 (MARRSRYISLAAVMATLLSALGVTFLLGQGRAEA) form the signal peptide. Positions 35 and 144 each coordinate Cu cation. The Chitin-binding type-4 domain occupies 35-225 (HGVAMMPGSR…QENFFSCSDV (191 aa)). The tract at residues 234–261 (VTGIRGSGGTPTPTPTPTTPPTTPPPTH) is disordered. Residues 245 to 260 (TPTPTPTTPPTTPPPT) show a composition bias toward pro residues. Residues 258–364 (PPTHSGSCMA…PVGTIGCVAP (107 aa)) form the CBM2 domain.

It depends on Cu(2+) as a cofactor.

The protein resides in the secreted. It catalyses the reaction [(1-&gt;4)-beta-D-glucosyl]n+m + reduced acceptor + O2 = [(1-&gt;4)-beta-D-glucosyl]m-1-(1-&gt;4)-D-glucono-1,5-lactone + [(1-&gt;4)-beta-D-glucosyl]n + acceptor + H2O.. The protein operates within glycan metabolism; cellulose degradation. Functionally, involved in the degradation of lignocellulosic biomass. Catalyzes the oxidative cleavage of glycosidic bonds in cellulosic substrates via a copper-dependent mechanism. Degrades phosphoric acid swollen cellulose (PASC) to oxidized cellooligosaccharides with degrees of polymerization of 4-8. Also shows activity on agricultural fiber paper pulps such as flax pulp. Is not active on chitin. The sequence is that of Lytic cellulose monooxygenase from Streptomyces ambofaciens (strain ATCC 23877 / 3486 / DSM 40053 / JCM 4204 / NBRC 12836 / NRRL B-2516).